The primary structure comprises 636 residues: MEQYKRILLKEFDSRQKVITELTNLEAILNLPKGTELYISDIHGEFEAFDYILRSCAGILNEKIKDCFGDSLSQDDKNRLSALVSYPELVLKEGNKSRDWYKDTIPQLLSLLAFAAAKYSRSKLRKALPPQYAYIIEELVYSDTALADKKSYFENILSYVIELREAVPFILGISGSIRRLLIDHLHVVGDIFDRGAGSPQVMDELLHFHSLDIQWGNHDIIWMGGFFGSKACMLNALRIAARYGYLWDIEKAYGLNLRALTLFADRTYKTNPKFRPILGHREVDFTAEEILQLEKVHQALTIIQFKLESQLIKRRPEFQMEDQVTLDKIDYWEECLTIDDKKHPLINTCFQTIDPTNPSELSPEEAQAVDSMLASFQGSLKLAEHINLLMKKGSMYKIYNQHLLFHGCIPLEPSGEFQPLMIHQAHYVGRKLLDFFEYHIRQAAKNKEIGDDFSTDLIWYCWRGKLSPLFGKDKMTTLERYFIEDKETHKEVENSYFSYRNSEKICQLILEEFGLFSQESRMVNGHTPVKTGKGESPIRGGGLLFVIDGGLCEAYQEKTGTAGYSLLNNSYGFQLVTHQPFQNAQKVVEAPFAQTSLKKVIENVEQRTLIKSTSIGQILMAQQQELFALLHEFYDF.

The protein belongs to the FBPase class 3 family. It depends on Mn(2+) as a cofactor.

The enzyme catalyses beta-D-fructose 1,6-bisphosphate + H2O = beta-D-fructose 6-phosphate + phosphate. It participates in carbohydrate biosynthesis; gluconeogenesis. The chain is Fructose-1,6-bisphosphatase class 3 from Streptococcus gordonii (strain Challis / ATCC 35105 / BCRC 15272 / CH1 / DL1 / V288).